A 301-amino-acid polypeptide reads, in one-letter code: Methionyl-tRNA formyltransferase (301 aa).

Residue 109-112 (SLLP) participates in (6S)-5,6,7,8-tetrahydrofolate binding.

Belongs to the Fmt family.

It catalyses the reaction L-methionyl-tRNA(fMet) + (6R)-10-formyltetrahydrofolate = N-formyl-L-methionyl-tRNA(fMet) + (6S)-5,6,7,8-tetrahydrofolate + H(+). Its function is as follows. Attaches a formyl group to the free amino group of methionyl-tRNA(fMet). The formyl group appears to play a dual role in the initiator identity of N-formylmethionyl-tRNA by promoting its recognition by IF2 and preventing the misappropriation of this tRNA by the elongation apparatus. This chain is Methionyl-tRNA formyltransferase, found in Novosphingobium aromaticivorans (strain ATCC 700278 / DSM 12444 / CCUG 56034 / CIP 105152 / NBRC 16084 / F199).